A 556-amino-acid chain; its full sequence is 2-methylpropanoate--CoA ligase CCL4 (556 aa).

Residues 192 to 200, 325 to 330, Asp423, 435 to 438, and Lys531 contribute to the ATP site; these read TSGTTSSPK, HGYGLT, and IKDR. Positions 260–325 are SBD1; the sequence is DSEIIYDMIK…TESLGFAVSH (66 aa). The SBD2 stretch occupies residues 326 to 402; the sequence is GYGLTETAGL…LRGGSVMLGY (77 aa).

It belongs to the ATP-dependent AMP-binding enzyme family. As to expression, mostly expressed in old leaves and in cones and glandular trichomes (lupulin glands) after flowering, and, to a lower extent, in stems, young leaves and flowers.

It is found in the cytoplasm. The protein localises to the cytosol. It carries out the reaction 2-methylpropanoate + ATP + CoA = 2-methylpropanoyl-CoA + AMP + diphosphate. The enzyme catalyses propanoate + ATP + CoA = propanoyl-CoA + AMP + diphosphate. It catalyses the reaction butanoate + ATP + CoA = butanoyl-CoA + AMP + diphosphate. The catalysed reaction is 2-methylbutanoate + ATP + CoA = 2-methylbutanoyl-CoA + AMP + diphosphate. Its pathway is secondary metabolite biosynthesis. Its function is as follows. Involved in the biosynthesis of prenylated phenolics natural products which contribute to the bitter taste of beer and display broad biological activities. Catalyzes the ligation of CoA on 2-methylpropanoate (isobutyric acid) and 2-methylbutanoate to produce 2-methylpropanoyl-CoA and 2-methylbutanoyl-CoA, respectively. Can also use propanoate and butanoate as substrates with a lower efficiency. In Humulus lupulus (European hop), this protein is 2-methylpropanoate--CoA ligase CCL4.